The following is a 396-amino-acid chain: MKILVLNSGSSSIKFKFFDNKVVKASGLVEKIGEQNSKVVLKNTLNNESFERELTINNHEEGLSIVNELFKESGILADLNALDGCGHRIVHGGRNLSEHCLVDDYVLKEIDRVSIFAPLHNPAHLAGIKTMIKAAPSVANAAIFDTAFHRTMPDFAYMYALPYDFYDKHNIRRYGFHGTSHAYVSSRAAKFLQKDQNELNVISAHLGNGASVCAIEKGKSVDTSMGFTPLEGLVMGTRCGDLDPAILPFISHLKGLTIEEIDTLMNKKSGVYGICGYNDFRDIEREIEQGNDKARLALDMFCYRLVKYIGSYFAVLPKTDAIIFTGGIGENDSLVRQKVCERLAHLGIELDFELNKQRISGERMINHANSKVKVLVIPTDEELEIARITEELIGKN.

Mg(2+) is bound at residue asparagine 7. Lysine 14 is a binding site for ATP. Arginine 88 lines the substrate pocket. Aspartate 145 serves as the catalytic Proton donor/acceptor. ATP-binding positions include 205 to 209 (HLGNG), 279 to 281 (DFR), and 327 to 331 (GIGEN). A Mg(2+)-binding site is contributed by glutamate 381.

This sequence belongs to the acetokinase family. In terms of assembly, homodimer. Mg(2+) is required as a cofactor. It depends on Mn(2+) as a cofactor.

Its subcellular location is the cytoplasm. It carries out the reaction acetate + ATP = acetyl phosphate + ADP. Its pathway is metabolic intermediate biosynthesis; acetyl-CoA biosynthesis; acetyl-CoA from acetate: step 1/2. Catalyzes the formation of acetyl phosphate from acetate and ATP. Can also catalyze the reverse reaction. The sequence is that of Acetate kinase from Campylobacter jejuni subsp. jejuni serotype O:2 (strain ATCC 700819 / NCTC 11168).